A 328-amino-acid chain; its full sequence is MERIIQQTDYDALSCKLAAISVGYLPSSGLQRLSVDLSKKYTEWHRSYLITLKKFSRRAFGKVDKAMRSSFPVMNYGTYLRTVGIDAAILEFLVANEKVQVVNLGCGSDLRMLPLLQMFPHLAYVDIDYNESVELKNSILRESEILRISLGLSKEDTAKSPFLIDQGRYKLAACDLNDITETTRLLDVCTKREIPTIVISECLLCYMHNNESQLLINTIMSKFSHGLWISYDPIGGSQPNDRFGAIMQSNLKESRNLEMPTLMTYNSKEKYASRWSAAPNVIVNDMWEIFNAQIPESERKRLRSLQFLDELEELKVMQTHYILMKAQW.

Residues Arg81, Gly105, Asp128, 175–177 (DLN), and Glu201 contribute to the S-adenosyl-L-methionine site.

The protein belongs to the methyltransferase superfamily. LCMT family.

The enzyme catalyses [phosphatase 2A protein]-C-terminal L-leucine + S-adenosyl-L-methionine = [phosphatase 2A protein]-C-terminal L-leucine methyl ester + S-adenosyl-L-homocysteine. With respect to regulation, inhibited by S-adenosyl-L-homocysteine. In terms of biological role, methylates the carboxyl group of the C-terminal leucine residue of protein phosphatase 2A catalytic subunits to form alpha-leucine ester residues. Acts on the two major protein phosphatase 2A catalytic subunits, PPH21 and PPH22. This Saccharomyces cerevisiae (strain ATCC 204508 / S288c) (Baker's yeast) protein is Leucine carboxyl methyltransferase 1 (PPM1).